A 445-amino-acid chain; its full sequence is GTPase Der (445 aa).

2 consecutive EngA-type G domains span residues 3–167 (PVIA…YAGQ) and 180–353 (IKIA…AAAM). GTP contacts are provided by residues 9-16 (GRPNVGKS), 56-60 (DTGGF), 119-122 (NKAE), 186-193 (GRPNVGKS), 233-237 (DTAGL), and 298-301 (NKWD). The 85-residue stretch at 354–438 (AKLPTPKLTR…PLRIEFRSSN (85 aa)) folds into the KH-like domain.

Belongs to the TRAFAC class TrmE-Era-EngA-EngB-Septin-like GTPase superfamily. EngA (Der) GTPase family. As to quaternary structure, associates with the 50S ribosomal subunit.

GTPase that plays an essential role in the late steps of ribosome biogenesis. This chain is GTPase Der, found in Burkholderia vietnamiensis (strain G4 / LMG 22486) (Burkholderia cepacia (strain R1808)).